Consider the following 263-residue polypeptide: Metaxin-2 (263 aa).

Position 2 is an N-acetylserine (Ser2).

Belongs to the metaxin family. As to quaternary structure, interacts with MTX1/metaxin-1. Associates with the mitochondrial contact site and cristae organizing system (MICOS) complex, composed of at least MICOS10/MIC10, CHCHD3/MIC19, CHCHD6/MIC25, APOOL/MIC27, IMMT/MIC60, APOO/MIC23/MIC26 and QIL1/MIC13. This complex was also known under the names MINOS or MitOS complex. The MICOS complex associates with mitochondrial outer membrane proteins SAMM50, MTX1 and MTX2 (together described as components of the mitochondrial outer membrane sorting assembly machinery (SAM) complex) and DNAJC11, mitochondrial inner membrane protein TMEM11 and with HSPA9. The MICOS and SAM complexes together with DNAJC11 are part of a large protein complex spanning both membranes termed the mitochondrial intermembrane space bridging (MIB) complex.

It localises to the mitochondrion outer membrane. The protein resides in the mitochondrion. Its function is as follows. Involved in transport of proteins into the mitochondrion. This chain is Metaxin-2 (MTX2), found in Homo sapiens (Human).